Consider the following 86-residue polypeptide: Small ribosomal subunit protein bS16 (86 aa).

Belongs to the bacterial ribosomal protein bS16 family.

The chain is Small ribosomal subunit protein bS16 from Hamiltonella defensa subsp. Acyrthosiphon pisum (strain 5AT).